Consider the following 311-residue polypeptide: Mediator of RNA polymerase II transcription subunit 27 (311 aa).

Ser132 bears the Phosphoserine mark. N6-methyllysine is present on Lys134.

It belongs to the Mediator complex subunit 27 family. As to quaternary structure, component of the Mediator complex, which is composed of MED1, MED4, MED6, MED7, MED8, MED9, MED10, MED11, MED12, MED13, MED13L, MED14, MED15, MED16, MED17, MED18, MED19, MED20, MED21, MED22, MED23, MED24, MED25, MED26, MED27, MED29, MED30, MED31, CCNC, CDK8 and CDC2L6/CDK11. The MED12, MED13, CCNC and CDK8 subunits form a distinct module termed the CDK8 module. Mediator containing the CDK8 module is less active than Mediator lacking this module in supporting transcriptional activation. Individual preparations of the Mediator complex lacking one or more distinct subunits have been variously termed ARC, CRSP, DRIP, PC2, SMCC and TRAP.

The protein localises to the nucleus. In terms of biological role, component of the Mediator complex, a coactivator involved in the regulated transcription of nearly all RNA polymerase II-dependent genes. Mediator functions as a bridge to convey information from gene-specific regulatory proteins to the basal RNA polymerase II transcription machinery. Mediator is recruited to promoters by direct interactions with regulatory proteins and serves as a scaffold for the assembly of a functional preinitiation complex with RNA polymerase II and the general transcription factors. This chain is Mediator of RNA polymerase II transcription subunit 27 (Med27), found in Mus musculus (Mouse).